Consider the following 97-residue polypeptide: Defensin-like protein 196 (97 aa).

The N-terminal stretch at 1-28 (MAKMSALSIFAIFIILVLVIFEIPEIEA) is a signal peptide. 4 disulfides stabilise this stretch: cysteine 33-cysteine 85, cysteine 46-cysteine 70, cysteine 55-cysteine 80, and cysteine 59-cysteine 82.

This sequence belongs to the DEFL family. Protease inhibitor I18 (RTI/MTI-2) subfamily.

The protein localises to the secreted. This Arabidopsis thaliana (Mouse-ear cress) protein is Defensin-like protein 196 (ATTI4).